The primary structure comprises 288 residues: Phosphatidylserine decarboxylase proenzyme (288 aa).

Catalysis depends on charge relay system; for autoendoproteolytic cleavage activity residues D95, H152, and S255. S255 acts as the Schiff-base intermediate with substrate; via pyruvic acid; for decarboxylase activity in catalysis. A Pyruvic acid (Ser); by autocatalysis modification is found at S255.

The protein belongs to the phosphatidylserine decarboxylase family. PSD-B subfamily. Prokaryotic type I sub-subfamily. Heterodimer of a large membrane-associated beta subunit and a small pyruvoyl-containing alpha subunit. Pyruvate is required as a cofactor. Post-translationally, is synthesized initially as an inactive proenzyme. Formation of the active enzyme involves a self-maturation process in which the active site pyruvoyl group is generated from an internal serine residue via an autocatalytic post-translational modification. Two non-identical subunits are generated from the proenzyme in this reaction, and the pyruvate is formed at the N-terminus of the alpha chain, which is derived from the carboxyl end of the proenzyme. The autoendoproteolytic cleavage occurs by a canonical serine protease mechanism, in which the side chain hydroxyl group of the serine supplies its oxygen atom to form the C-terminus of the beta chain, while the remainder of the serine residue undergoes an oxidative deamination to produce ammonia and the pyruvoyl prosthetic group on the alpha chain. During this reaction, the Ser that is part of the protease active site of the proenzyme becomes the pyruvoyl prosthetic group, which constitutes an essential element of the active site of the mature decarboxylase.

It localises to the cell membrane. The enzyme catalyses a 1,2-diacyl-sn-glycero-3-phospho-L-serine + H(+) = a 1,2-diacyl-sn-glycero-3-phosphoethanolamine + CO2. It participates in phospholipid metabolism; phosphatidylethanolamine biosynthesis; phosphatidylethanolamine from CDP-diacylglycerol: step 2/2. Functionally, catalyzes the formation of phosphatidylethanolamine (PtdEtn) from phosphatidylserine (PtdSer). This chain is Phosphatidylserine decarboxylase proenzyme, found in Methylococcus capsulatus (strain ATCC 33009 / NCIMB 11132 / Bath).